The following is a 227-amino-acid chain: ATP-dependent dethiobiotin synthetase BioD (227 aa).

Residue 13-18 participates in ATP binding; that stretch reads DIGKTY. Thr-17 is a binding site for Mg(2+). Residue Lys-38 is part of the active site. Ser-42 serves as a coordination point for substrate. Residues Asp-55, 116-119, and 179-180 contribute to the ATP site; these read EGSG and NN. Mg(2+) is bound by residues Asp-55 and Glu-116.

The protein belongs to the dethiobiotin synthetase family. In terms of assembly, homodimer. Requires Mg(2+) as cofactor.

It localises to the cytoplasm. The enzyme catalyses (7R,8S)-7,8-diammoniononanoate + CO2 + ATP = (4R,5S)-dethiobiotin + ADP + phosphate + 3 H(+). Its pathway is cofactor biosynthesis; biotin biosynthesis; biotin from 7,8-diaminononanoate: step 1/2. Functionally, catalyzes a mechanistically unusual reaction, the ATP-dependent insertion of CO2 between the N7 and N8 nitrogen atoms of 7,8-diaminopelargonic acid (DAPA, also called 7,8-diammoniononanoate) to form a ureido ring. The protein is ATP-dependent dethiobiotin synthetase BioD of Clostridium botulinum (strain ATCC 19397 / Type A).